Reading from the N-terminus, the 648-residue chain is NAD(P)H-quinone oxidoreductase subunit 5, chloroplastic (648 aa).

Transmembrane regions (helical) follow at residues 7 to 27, 39 to 59, 89 to 109, 124 to 144, 147 to 167, 189 to 209, 215 to 235, 258 to 278, 289 to 309, 327 to 347, 354 to 374, 395 to 415, 432 to 452, 472 to 492, 518 to 538, and 625 to 645; these read AIWL…IGLL, LHGA…LGVL, VDPL…LVMI, FFVY…SPNL, VYGF…FWFT, LLLG…ASIA, LLIA…LVFM, TPIS…FLVA, LVME…ATMA, LGYM…FHLT, ALLF…VGFS, AMTF…ACFW, WLIA…IYFL, LGMV…GSLG, LAEF…GISL, and FYIL…TTHL.

The protein belongs to the complex I subunit 5 family. As to quaternary structure, NDH is composed of at least 16 different subunits, 5 of which are encoded in the nucleus.

Its subcellular location is the plastid. The protein resides in the chloroplast thylakoid membrane. The catalysed reaction is a plastoquinone + NADH + (n+1) H(+)(in) = a plastoquinol + NAD(+) + n H(+)(out). The enzyme catalyses a plastoquinone + NADPH + (n+1) H(+)(in) = a plastoquinol + NADP(+) + n H(+)(out). NDH shuttles electrons from NAD(P)H:plastoquinone, via FMN and iron-sulfur (Fe-S) centers, to quinones in the photosynthetic chain and possibly in a chloroplast respiratory chain. The immediate electron acceptor for the enzyme in this species is believed to be plastoquinone. Couples the redox reaction to proton translocation, and thus conserves the redox energy in a proton gradient. This Nephroselmis olivacea (Green alga) protein is NAD(P)H-quinone oxidoreductase subunit 5, chloroplastic (ndhF).